Here is a 111-residue protein sequence, read N- to C-terminus: Cytochrome c (111 aa).

A1 is subject to N-acetylalanine. Heme c contacts are provided by C22, C25, and H26. The residue at position 80 (K80) is an N6,N6,N6-trimethyllysine. M88 contributes to the heme c binding site. The residue at position 94 (K94) is an N6,N6,N6-trimethyllysine.

It belongs to the cytochrome c family. Binds 1 heme c group covalently per subunit.

The protein localises to the mitochondrion intermembrane space. Electron carrier protein. The oxidized form of the cytochrome c heme group can accept an electron from the heme group of the cytochrome c1 subunit of cytochrome reductase. Cytochrome c then transfers this electron to the cytochrome oxidase complex, the final protein carrier in the mitochondrial electron-transport chain. The chain is Cytochrome c from Brassica napus (Rape).